A 380-amino-acid chain; its full sequence is Protein RecA (380 aa).

An ATP-binding site is contributed by 65 to 72; sequence GPESSGKT. Residues 329-380 are disordered; it reads DATGEETSETDDQAKEAKDKGTAKNGSKGQSKSTKATPAETALDLGDQPTEK. Residues 340–350 show a composition bias toward basic and acidic residues; sequence DQAKEAKDKGT. Positions 352-364 are enriched in polar residues; that stretch reads KNGSKGQSKSTKA.

The protein belongs to the RecA family.

The protein resides in the cytoplasm. In terms of biological role, can catalyze the hydrolysis of ATP in the presence of single-stranded DNA, the ATP-dependent uptake of single-stranded DNA by duplex DNA, and the ATP-dependent hybridization of homologous single-stranded DNAs. It interacts with LexA causing its activation and leading to its autocatalytic cleavage. The chain is Protein RecA from Lactiplantibacillus plantarum (strain ATCC BAA-793 / NCIMB 8826 / WCFS1) (Lactobacillus plantarum).